The chain runs to 472 residues: Glutamate synthase [NADPH] small chain (472 aa).

Positions Gly38–Leu69 constitute a 4Fe-4S ferredoxin-type domain. The [4Fe-4S] cluster site is built by Cys47, Cys50, Cys55, and Cys59.

Aggregate of 4 catalytic active heterodimers, consisting of a large and a small subunit. [4Fe-4S] cluster serves as cofactor.

It catalyses the reaction 2 L-glutamate + NADP(+) = L-glutamine + 2-oxoglutarate + NADPH + H(+). The protein operates within amino-acid biosynthesis; L-glutamate biosynthesis via GLT pathway; L-glutamate from 2-oxoglutarate and L-glutamine (NADP(+) route): step 1/1. It functions in the pathway energy metabolism; nitrogen metabolism. Catalyzes the conversion of L-glutamine and 2-oxoglutarate into two molecules of L-glutamate. This chain is Glutamate synthase [NADPH] small chain (gltD), found in Escherichia coli (strain K12).